The sequence spans 313 residues: uncharacterized protein (313 aa).

This is an uncharacterized protein from Orgyia pseudotsugata multicapsid polyhedrosis virus (OpMNPV).